A 370-amino-acid polypeptide reads, in one-letter code: Biotin synthase (370 aa).

Residues 79–314 enclose the Radical SAM core domain; the sequence is CCGNVVDLCS…KQIIRYAGGR (236 aa). [4Fe-4S] cluster contacts are provided by Cys97, Cys101, and Cys104. Cys142, Cys179, Cys239, and Arg309 together coordinate [2Fe-2S] cluster.

It belongs to the radical SAM superfamily. Biotin synthase family. In terms of assembly, homodimer. Requires [4Fe-4S] cluster as cofactor. The cofactor is [2Fe-2S] cluster.

The enzyme catalyses (4R,5S)-dethiobiotin + (sulfur carrier)-SH + 2 reduced [2Fe-2S]-[ferredoxin] + 2 S-adenosyl-L-methionine = (sulfur carrier)-H + biotin + 2 5'-deoxyadenosine + 2 L-methionine + 2 oxidized [2Fe-2S]-[ferredoxin]. Its pathway is cofactor biosynthesis; biotin biosynthesis; biotin from 7,8-diaminononanoate: step 2/2. In terms of biological role, catalyzes the conversion of dethiobiotin (DTB) to biotin by the insertion of a sulfur atom into dethiobiotin via a radical-based mechanism. This chain is Biotin synthase, found in Trichodesmium erythraeum (strain IMS101).